A 280-amino-acid chain; its full sequence is Threonylcarbamoyl-AMP synthase (280 aa).

The N-terminal 56 residues, 1 to 56 (MSTARPCAGLRAAVAAGMGLSDGPAGSSRGCRLLRPPAPAPALPGARLLRLPESEA), are a transit peptide targeting the mitochondrion. The residue at position 61 (Ser61) is a Phosphoserine. The 191-residue stretch at 68-258 (TEALRAAVAE…KFGIIRSGCA (191 aa)) folds into the YrdC-like domain.

Belongs to the SUA5 family. Interacts with RSC1A1.

It localises to the cytoplasm. The protein resides in the mitochondrion. Its subcellular location is the cell membrane. It catalyses the reaction L-threonine + hydrogencarbonate + ATP = L-threonylcarbamoyladenylate + diphosphate + H2O. In terms of biological role, cytoplasmic and mitochondrial threonylcarbamoyl-AMP synthase required for the formation of a threonylcarbamoyl group on adenosine at position 37 (t(6)A37) in tRNAs that read codons beginning with adenine. Catalyzes the conversion of L-threonine, HCO(3)(-)/CO(2) and ATP to give threonylcarbamoyl-AMP (TC-AMP) as the acyladenylate intermediate, with the release of diphosphate. Participates in t(6)A37 formation in cytoplasmic and mitochondrial tRNAs. May regulate the activity of some transporters. This is Threonylcarbamoyl-AMP synthase from Rattus norvegicus (Rat).